The following is a 226-amino-acid chain: MKLQEKEVLLFDLDGTLVDSAPDLALAVNRTLKDLNKATFDQDTIHHWVGNGAKVLIERALSGSAIIDKELDETLTKDALTIFLAHYQQCLCIESVLYDDVQEGLLSLKAAGFRLAIITNKPAIFIQPILTGLGIDNLFELLIGGDTLADKKPHPAPLHYAMKQLNVVAEQCVMIGDSKNDILAAKAANIDSVGLTYGYNYGEDINQYGPQWCFDTFNELLISLKR.

Asp12 (nucleophile) is an active-site residue. Mg(2+) contacts are provided by Asp12, Asp14, and Asp177.

It belongs to the HAD-like hydrolase superfamily. CbbY/CbbZ/Gph/YieH family. The cofactor is Mg(2+).

It carries out the reaction 2-phosphoglycolate + H2O = glycolate + phosphate. It functions in the pathway organic acid metabolism; glycolate biosynthesis; glycolate from 2-phosphoglycolate: step 1/1. Functionally, specifically catalyzes the dephosphorylation of 2-phosphoglycolate. Is involved in the dissimilation of the intracellular 2-phosphoglycolate formed during the DNA repair of 3'-phosphoglycolate ends, a major class of DNA lesions induced by oxidative stress. The polypeptide is Phosphoglycolate phosphatase (Colwellia psychrerythraea (strain 34H / ATCC BAA-681) (Vibrio psychroerythus)).